Consider the following 523-residue polypeptide: Cytochrome P450 monooxygenase ple1 (523 aa).

Residues 9-29 form a helical membrane-spanning segment; sequence ALPVLAIWAAIGLAYWIDSQK. Asn141 carries N-linked (GlcNAc...) asparagine glycosylation. Residue Cys444 coordinates heme.

Belongs to the cytochrome P450 family. Heme serves as cofactor.

Its subcellular location is the membrane. Its pathway is secondary metabolite biosynthesis; terpenoid biosynthesis. Cytochrome P450 monooxygenase; part of the gene cluster that mediates the biosynthesis of pleuromutilin, a tricyclic diterpene showing antibacterial properties. The geranylgeranyl diphosphate (GGPP) synthase ple4 catalyzes the first step in pleuromutilin biosynthesis. GGPP is then substrate of the premutilin synthase (PS) ple3 to yield premutilin. Premutilin synthase is a bifunctional enzyme composed of the fusion of a class II diterpene cyclase (DTC) and a class I diterpene synthase (DTS), with the corresponding domains and active sites containing characteristic aspartate-rich motifs. GGPP is first converted to mutildienyl-diphosphate (MPP) at the class II DTC site. MPP is subsequently further cyclized at the class I DTS site, followed by a 1,5-hydride shift and addition of water prior to terminating deprotonation, to yield premutilin. The cytochrome P450 monooxygenases ple5 and ple6 hydroxylate premutilin at C-11 and C-3, respectively, producing 11-hydroxypremutilin and 3-hydroxypremutilin. The combination of the actions of both ple5 and ple6 leads to the production of 3,11-dihydroxypremutilin. The short chain dehydrogenase ple7 further converts 3,11-dihydroxypremutilin into mutilin. The acetyltransferase ple2 then acetylates mutilin to produce 14-O-acetylmutilin. Finally, the cytochrome P450 monooxygenase ple1 catalyzes hydroxylation on the alpha position of the acetyl side chain of 14-O-acetylmutilin to yield pleuromutilin. The protein is Cytochrome P450 monooxygenase ple1 of Rhodocybe pseudopiperita (Clitopilus pseudopiperitus).